Consider the following 130-residue polypeptide: Fluoride-specific ion channel FluC (130 aa).

4 helical membrane passes run Phe-3–Gly-23, Leu-38–Ala-58, Phe-67–Leu-87, and Ile-102–Leu-122. Na(+) is bound by residues Gly-77 and Thr-80.

This sequence belongs to the fluoride channel Fluc/FEX (TC 1.A.43) family.

It localises to the cell inner membrane. The catalysed reaction is fluoride(in) = fluoride(out). Its activity is regulated as follows. Na(+) is not transported, but it plays an essential structural role and its presence is essential for fluoride channel function. Functionally, fluoride-specific ion channel. Important for reducing fluoride concentration in the cell, thus reducing its toxicity. The sequence is that of Fluoride-specific ion channel FluC from Helicobacter pylori (strain G27).